Reading from the N-terminus, the 156-residue chain is 6,7-dimethyl-8-ribityllumazine synthase (156 aa).

5-amino-6-(D-ribitylamino)uracil-binding positions include Phe22, 57–59 (AYE), and 81–83 (TVI). Residue 86-87 (GT) coordinates (2S)-2-hydroxy-3-oxobutyl phosphate. His89 (proton donor) is an active-site residue. Position 114 (Phe114) interacts with 5-amino-6-(D-ribitylamino)uracil. Position 128 (Arg128) interacts with (2S)-2-hydroxy-3-oxobutyl phosphate.

This sequence belongs to the DMRL synthase family. Forms an icosahedral capsid composed of 60 subunits, arranged as a dodecamer of pentamers.

The enzyme catalyses (2S)-2-hydroxy-3-oxobutyl phosphate + 5-amino-6-(D-ribitylamino)uracil = 6,7-dimethyl-8-(1-D-ribityl)lumazine + phosphate + 2 H2O + H(+). It participates in cofactor biosynthesis; riboflavin biosynthesis; riboflavin from 2-hydroxy-3-oxobutyl phosphate and 5-amino-6-(D-ribitylamino)uracil: step 1/2. In terms of biological role, catalyzes the formation of 6,7-dimethyl-8-ribityllumazine by condensation of 5-amino-6-(D-ribitylamino)uracil with 3,4-dihydroxy-2-butanone 4-phosphate. This is the penultimate step in the biosynthesis of riboflavin. This is 6,7-dimethyl-8-ribityllumazine synthase from Edwardsiella ictaluri (strain 93-146).